A 1313-amino-acid chain; its full sequence is Target of rapamycin complex 1 subunit mip1 (1313 aa).

A disordered region spans residues methionine 1 to serine 35. 3 positions are modified to phosphoserine: serine 834, serine 837, and serine 882. WD repeat units lie at residues threonine 986–lysine 1029, serine 1033–leucine 1074, glycine 1087–asparagine 1126, arginine 1130–leucine 1170, glutamate 1176–threonine 1216, threonine 1219–arginine 1259, and proline 1268–aspartate 1308.

It belongs to the WD repeat RAPTOR family. The target of rapamycin complex 1 (TORC1) is composed of at least mip1, pop3/wat1, tco89, toc1 and tor2.

It is found in the cytoplasm. In terms of biological role, component of TORC1, which regulates multiple cellular processes to control cell growth in response to environmental signals. Tor2 is essential for growth. Nutrient limitation and environmental stress signals cause inactivation of TORC1. Active TORC1 positively controls cell growth and ribosome biogenesis by regulating ribosomal protein gene expression. TORC1 negatively controls G1 cell-cycle arrest, sexual development and amino acid uptake. Represses mating, meiosis and sporulation efficiency by interfering with the functions of the transcription factor ste11 and the meiosis-promoting RNA-binding protein mei2. The protein is Target of rapamycin complex 1 subunit mip1 of Schizosaccharomyces pombe (strain 972 / ATCC 24843) (Fission yeast).